The primary structure comprises 375 residues: Neutral protease 2 homolog MGYG_00813 (375 aa).

The first 19 residues, Met1–Gly19, serve as a signal peptide directing secretion. Residues Phe20–Arg190 constitute a propeptide that is removed on maturation. Cystine bridges form between Cys198-Cys268 and Cys275-Cys293. His318 serves as a coordination point for Zn(2+). Glu319 is an active-site residue. The Zn(2+) site is built by His322 and Asp333.

This sequence belongs to the peptidase M35 family. Zn(2+) serves as cofactor.

It localises to the secreted. It carries out the reaction Preferential cleavage of bonds with hydrophobic residues in P1'. Also 3-Asn-|-Gln-4 and 8-Gly-|-Ser-9 bonds in insulin B chain.. Functionally, secreted metalloproteinase that allows assimilation of proteinaceous substrates. Shows high activities on basic nuclear substrates such as histone and protamine. May be involved in virulence. This chain is Neutral protease 2 homolog MGYG_00813, found in Arthroderma gypseum (strain ATCC MYA-4604 / CBS 118893) (Microsporum gypseum).